The primary structure comprises 146 residues: Hemoglobin subunit beta (146 aa).

The Globin domain maps to 2–146 (HWTAEEKQLI…VAHALARKYH (145 aa)). The heme b site is built by histidine 63 and histidine 92.

The protein belongs to the globin family. In terms of assembly, heterotetramer of two alpha chains and two beta chains. As to expression, red blood cells.

Functionally, involved in oxygen transport from the lung to the various peripheral tissues. This chain is Hemoglobin subunit beta (HBB), found in Anas platyrhynchos platyrhynchos (Northern mallard).